The following is a 131-amino-acid chain: Global transcriptional regulator Spx 1 (131 aa).

Cysteines 10 and 13 form a disulfide.

It belongs to the ArsC family. Spx subfamily. As to quaternary structure, interacts with the C-terminal domain of the alpha subunit of the RNAP.

It is found in the cytoplasm. Its function is as follows. Global transcriptional regulator that plays a key role in stress response and exerts either positive or negative regulation of genes. Acts by interacting with the C-terminal domain of the alpha subunit of the RNA polymerase (RNAP). This interaction can enhance binding of RNAP to the promoter region of target genes and stimulate their transcription, or block interaction of RNAP with activator. The sequence is that of Global transcriptional regulator Spx 1 from Bacillus anthracis.